Here is a 168-residue protein sequence, read N- to C-terminus: Disulfide bond formation protein B 2 (168 aa).

Topologically, residues M1 to F9 are cytoplasmic. A helical membrane pass occupies residues F10–R26. Residues L27–L44 are Periplasmic-facing. C36 and C39 form a disulfide bridge. The chain crosses the membrane as a helical span at residues L45–P61. Residues G62–L67 lie on the Cytoplasmic side of the membrane. Residues R68 to A85 traverse the membrane as a helical segment. Residues R86–E140 are Periplasmic-facing. A disulfide bridge links C100 with C126. Residues W141–A159 form a helical membrane-spanning segment. The Cytoplasmic segment spans residues Y160–T168.

Belongs to the DsbB family.

It localises to the cell inner membrane. Its function is as follows. Required for disulfide bond formation in some periplasmic proteins. Acts by oxidizing the DsbA protein. The protein is Disulfide bond formation protein B 2 (dsbB2) of Pseudomonas putida (strain ATCC 47054 / DSM 6125 / CFBP 8728 / NCIMB 11950 / KT2440).